The primary structure comprises 263 residues: MNATTSAHHPLHIETIGQGPDLVVIHGWGVNSAVFTPLHEQLSEYRVHYVDLPGFGLSQPIAGNLSTWIDALINNLPTNAIWAGWSLGGLVATQAAIDYPSHIKGLITIASSPCFMAREEEAWPGIPPQVLSMFGEQLGQNLPKTIERFLAIQAMGSETAKEDIKQLRDLVLARPLPDAAALTQGLDMLNQIDLRMQLSSISQPWLRIWGRLDGLVPKRVQPQMPTASHITDVMLAKASHAPFVSHRQEFLQALLPWLTQFKD.

Residues Trp28, 86–87, and 149–153 each bind substrate; these read SL and FLAIQ. Ser86 acts as the Nucleophile in catalysis. Residues Asp213 and His240 contribute to the active site. Substrate is bound at residue His240.

The protein belongs to the AB hydrolase superfamily. Carboxylesterase BioH family. In terms of assembly, monomer.

Its subcellular location is the cytoplasm. It carries out the reaction 6-carboxyhexanoyl-[ACP] methyl ester + H2O = 6-carboxyhexanoyl-[ACP] + methanol + H(+). Its pathway is cofactor biosynthesis; biotin biosynthesis. In terms of biological role, the physiological role of BioH is to remove the methyl group introduced by BioC when the pimeloyl moiety is complete. It allows to synthesize pimeloyl-ACP via the fatty acid synthetic pathway through the hydrolysis of the ester bonds of pimeloyl-ACP esters. This chain is Pimeloyl-[acyl-carrier protein] methyl ester esterase, found in Shewanella oneidensis (strain ATCC 700550 / JCM 31522 / CIP 106686 / LMG 19005 / NCIMB 14063 / MR-1).